The primary structure comprises 213 residues: Probable nicotinate-nucleotide adenylyltransferase (213 aa).

It belongs to the NadD family.

The enzyme catalyses nicotinate beta-D-ribonucleotide + ATP + H(+) = deamido-NAD(+) + diphosphate. It functions in the pathway cofactor biosynthesis; NAD(+) biosynthesis; deamido-NAD(+) from nicotinate D-ribonucleotide: step 1/1. Catalyzes the reversible adenylation of nicotinate mononucleotide (NaMN) to nicotinic acid adenine dinucleotide (NaAD). In Trichlorobacter lovleyi (strain ATCC BAA-1151 / DSM 17278 / SZ) (Geobacter lovleyi), this protein is Probable nicotinate-nucleotide adenylyltransferase.